The sequence spans 328 residues: NADH:quinone reductase (328 aa).

Residues 22–24, Thr-75, Lys-124, Ala-150, 178–180, and 201–202 each bind FMN; these read GMQ, SGG, and GT.

The protein belongs to the nitronate monooxygenase family. As to quaternary structure, monomer. It depends on FMN as a cofactor.

It catalyses the reaction a quinone + NADH + H(+) = a quinol + NAD(+). Catalyzes the NADH-dependent reduction of a broad spectrum of quinone substrates, generating the corresponding hydroquinones. Highly prefers NADH to NADPH as a reducing substrate. Also displays a small NADH oxidase activity. Does not exhibit nitronate monooxygenase activity; is inactive against propionate 3-nitronate, 3-nitropropionate, nitroethane, 1-nitropropane, 2-nitropropane, and the anionic forms ethylnitronate, propyl-1-nitronate, and propyl-2-nitronate. Has no azoreductase activity since it is not able to reduce the azo dye methyl red with NADH. May be required to maintain an appropriate [NAD(+)]/[NADH] ratio for the catabolism of fatty acids in P.aeruginosa PAO1. In Pseudomonas aeruginosa (strain ATCC 15692 / DSM 22644 / CIP 104116 / JCM 14847 / LMG 12228 / 1C / PRS 101 / PAO1), this protein is NADH:quinone reductase.